The sequence spans 395 residues: Prostaglandin D2 receptor 2 (395 aa).

Topologically, residues 1–33 are extracellular; that stretch reads MSANATLKPLCPILEQMSRLQSHSNTSIRYIDH. N-linked (GlcNAc...) asparagine glycans are attached at residues N4 and N25. The chain crosses the membrane as a helical span at residues 34-56; sequence AAVLLHGLASLLGLVENGVILFV. Residues 57 to 67 are Cytoplasmic-facing; that stretch reads VGCRMRQTVVT. The chain crosses the membrane as a helical span at residues 68-89; the sequence is TWVLHLALSDLLASASLPFFTY. The Extracellular segment spans residues 90–106; the sequence is FLAVGHSWELGTTFCKL. C104 and C182 form a disulfide bridge. The helical transmembrane segment at 107–127 threads the bilayer; it reads HSSIFFLNMFASGFLLSAISL. The Cytoplasmic portion of the chain corresponds to 128–146; it reads DRCLQVVRPVWAQNHRTVA. A helical membrane pass occupies residues 147–168; that stretch reads AAHKVCLVLWALAVLNTVPYFV. Residues 169–210 are Extracellular-facing; it reads FRDTISRLDGRIMCYYNVLLLNPGPDRDATCNSRQVALAVSK. A helical membrane pass occupies residues 211 to 231; sequence FLLAFLVPLAIIASSHAAVSL. Topologically, residues 232-247 are cytoplasmic; that stretch reads RLQHRGRRRPGRFVRL. A helical transmembrane segment spans residues 248 to 269; that stretch reads VAAVVAAFALCWGPYHVFSLLE. The Extracellular portion of the chain corresponds to 270–288; it reads ARAHANPGLRPLVWRGLPF. Residues 289–308 form a helical membrane-spanning segment; sequence VTSLAFFNSVANPVLYVLTC. The Cytoplasmic portion of the chain corresponds to 309 to 395; it reads PDMLRKLRRS…LNRALSSTSS (87 aa). The Involved in the recycling of CRTH2 motif lies at 330–333; that stretch reads DSEL. Phosphoserine occurs at positions 331 and 345. The segment at 333-363 is disordered; it reads LGGAGSSRRRRTSSTARSASPLALCSRPEEP.

The protein belongs to the G-protein coupled receptor 1 family. In terms of processing, phosphorylated. Widespread expression. High expression in stomach, small intestine, heart and thymus. Intermediate expression in colon, spinal cord and peripheral blood and low expression in brain, skeletal muscle and spleen. Expressed also on Th2- and Tc2- type cells, eosinophils and basophils.

It is found in the cell membrane. Functionally, receptor for prostaglandin D2 (PGD2). Coupled to the G(i)-protein. Receptor activation may result in pertussis toxin-sensitive decreases in cAMP levels and Ca(2+) mobilization. PI3K signaling is also implicated in mediating PTGDR2 effects. PGD2 induced receptor internalization. CRTH2 internalization can be regulated by diverse kinases such as, PKC, PKA, GRK2, GPRK5/GRK5 and GRK6. Receptor activation is responsible, at least in part, in immune regulation and allergic/inflammation responses. In Homo sapiens (Human), this protein is Prostaglandin D2 receptor 2 (PTGDR2).